We begin with the raw amino-acid sequence, 910 residues long: Adhesion G-protein coupled receptor F1 (910 aa).

The first 19 residues, 1–19 (MKVGVLWLISFFTFTDGHG), serve as a signal peptide directing secretion. The Extracellular portion of the chain corresponds to 20–583 (GFLGKNDGIK…SPFVPSTIFP (564 aa)). Residues Asn139, Asn168, Asn205, Asn282, Asn310, Asn317, Asn329, Asn354, Asn368, Asn389, Asn410, Asn423, Asn437, Asn455, Asn512, Asn528, and Asn553 are each glycosylated (N-linked (GlcNAc...) asparagine). In terms of domain architecture, SEA spans 148–256 (ERTKIWGTFK…GSFRVFGKAQ (109 aa)). Intrachain disulfides connect Cys257–Cys287 and Cys275–Cys299. Residues 437–579 (NKSQLKRGYS…SILMSPFVPS (143 aa)) enclose the GAIN-B domain. 2 disulfide bridges follow: Cys534-Cys561 and Cys549-Cys563. The GPS stretch occupies residues 534–579 (CVFWDFSHLQWNDAGCHLVNETQDIVTCQCTHLTSFSILMSPFVPS). The stachel stretch occupies residues 568-576 (SFSILMSPF). Residues 584–609 (VVKWITYVGLGISIGSLILCLIIEAL) form a helical membrane-spanning segment. Residues 610–621 (FWKQIKKSQTSH) are Cytoplasmic-facing. Residues 622–646 (TRRICMVNIALSLLIADVWFIVGAT) form a helical membrane-spanning segment. The Extracellular portion of the chain corresponds to 647–658 (VDTTVNPSGVCT). A disulfide bond links Cys657 and Cys733. A helical membrane pass occupies residues 659-684 (AAVFFTHFFYLSLFFWMLMLGILLAY). Residues 685 to 696 (RIILVFHHMAQH) are Cytoplasmic-facing. The helical transmembrane segment at 697 to 719 (LMMAVGFCLGYGCPLIISVITIA) threads the bilayer. Residues 720–742 (VTQPSNTYKRKDVCWLNWSNGSK) lie on the Extracellular side of the membrane. Residues Asn736 and Asn739 are each glycosylated (N-linked (GlcNAc...) asparagine). A helical membrane pass occupies residues 743-767 (PLLAFVVPALAIVAVNFVVVLLVLT). The Cytoplasmic segment spans residues 768-784 (KLWRPTVGERLSRDDKA). The chain crosses the membrane as a helical span at residues 785–813 (TIIRVGKSLLILTPLLGLTWGFGIGTIVD). At 814–816 (SQN) the chain is on the extracellular side. Residues 817–842 (LAWHVIFALLNAFQGFFILCFGILLD) traverse the membrane as a helical segment. Over 843-910 (SKLRQLLFNK…IMLTQFVSNE (68 aa)) the chain is Cytoplasmic.

Belongs to the G-protein coupled receptor 2 family. Adhesion G-protein coupled receptor (ADGR) subfamily. Heterodimer of 2 chains generated by proteolytic processing; the large extracellular N-terminal fragment and the membrane-bound C-terminal fragment predominantly remain associated and non-covalently linked. Autoproteolytically processed at the GPS region of the GAIN-B domain; this cleavage modulates receptor activity. Post-translationally, glycosylated. Glycosylation at Asn-389 is required for secretion or folding. Mainly expressed in the kidney. Up-regulated in lung adenocarcinomas and prostate cancers.

The protein localises to the cell membrane. Its subcellular location is the secreted. Its activity is regulated as follows. Forms a heterodimer of 2 chains generated by proteolytic processing that remain associated through non-covalent interactions mediated by the GAIN-B domain. In the inactivated receptor, the Stachel sequence (also named stalk) is embedded in the GAIN-B domain, where it adopts a beta-strand conformation. On activation, the Stachel moves into the 7 transmembrane region and adopts a twisted hook-shaped configuration that forms contacts within the receptor, leading to coupling of a G-alpha protein, which activates signaling. The cleaved GAIN-B and N-terminal domains can then dissociate from the rest of the receptor. Its function is as follows. Adhesion G-protein coupled receptor (aGPCR) for N-docosahexaenoylethanolamine (synaptamide), an omega-3 fatty acid lipid highly enriched in the brain. Ligand binding causes a conformation change that triggers signaling via guanine nucleotide-binding proteins (G proteins) and modulates the activity of downstream effectors, such as adenylate cyclase. ADGRF1 is coupled to G(s) G proteins and mediates activation of adenylate cyclase activity. Also able to couple to G(q), G(i) and G(12)/G(13) G proteins; additional evidence is however required to confirm this result in vivo. Involved in the development of neurons and cognitive function. In liver, involved in fat accumulation. The protein is Adhesion G-protein coupled receptor F1 of Homo sapiens (Human).